We begin with the raw amino-acid sequence, 956 residues long: Transient receptor potential channel pyrexia (956 aa).

Residues methionine 1–lysine 491 are Cytoplasmic-facing. ANK repeat units follow at residues arginine 132–arginine 161, lysine 166–isoleucine 195, glutamate 198–threonine 227, tyrosine 231–serine 260, glycine 265–cysteine 294, serine 298–alanine 327, aspartate 331–lysine 362, and tyrosine 366–alanine 395. The chain crosses the membrane as a helical span at residues phenylalanine 492–isoleucine 512. The Extracellular segment spans residues tryptophan 513–cysteine 525. Residues valine 526 to leucine 546 form a helical membrane-spanning segment. The Cytoplasmic portion of the chain corresponds to glycine 547–glutamate 565. The chain crosses the membrane as a helical span at residues asparagine 566 to threonine 584. Residues valine 585–alanine 601 lie on the Extracellular side of the membrane. The chain crosses the membrane as a helical span at residues alanine 602–phenylalanine 622. Over glycine 623 to lysine 638 the chain is Cytoplasmic. The chain crosses the membrane as a helical span at residues phenylalanine 639 to asparagine 659. Residues aspartate 660 to histidine 701 are Extracellular-facing. The N-linked (GlcNAc...) asparagine glycan is linked to asparagine 666. A helical transmembrane segment spans residues isoleucine 702–leucine 722. At alanine 723–arginine 956 the chain is on the cytoplasmic side.

This sequence belongs to the transient receptor (TC 1.A.4) family. STrpC subfamily. As to quaternary structure, homooligomer; between isoform A and isoform B. In terms of tissue distribution, expressed in various peripheral nerves and the central nerves in embryos. In adults, it is expressed in sensory neurons lying beneath the bristles around eyes, neurons innervating the bristles on the back of thorax and neurons in maxillary palps, proboscis and antennae. Expressed in multidendritic neurons, which mediate temperature sensing, as well as non-multidendritic neurons in larval epidermis. Localizes ubiquitously throughout neurites.

It is found in the membrane. Its function is as follows. Receptor-activated non-selective cation channel involved in protection or tolerance from high temperature stress. Activated by temperatures above 40 degrees Celsius. More permeable to K(+) than to Na(+). May act in stress protection allow flies to survive in natural environments. The sequence is that of Transient receptor potential channel pyrexia (pyx) from Drosophila melanogaster (Fruit fly).